The following is a 425-amino-acid chain: UDP-N-acetylglucosamine 1-carboxyvinyltransferase (425 aa).

24-25 (KN) serves as a coordination point for phosphoenolpyruvate. Arg-95 is a UDP-N-acetyl-alpha-D-glucosamine binding site. Cys-119 (proton donor) is an active-site residue. A 2-(S-cysteinyl)pyruvic acid O-phosphothioketal modification is found at Cys-119. UDP-N-acetyl-alpha-D-glucosamine-binding positions include 124 to 128 (RPVDQ), Asp-308, and Val-330.

It belongs to the EPSP synthase family. MurA subfamily.

It is found in the cytoplasm. It carries out the reaction phosphoenolpyruvate + UDP-N-acetyl-alpha-D-glucosamine = UDP-N-acetyl-3-O-(1-carboxyvinyl)-alpha-D-glucosamine + phosphate. It functions in the pathway cell wall biogenesis; peptidoglycan biosynthesis. Functionally, cell wall formation. Adds enolpyruvyl to UDP-N-acetylglucosamine. The polypeptide is UDP-N-acetylglucosamine 1-carboxyvinyltransferase (Deinococcus deserti (strain DSM 17065 / CIP 109153 / LMG 22923 / VCD115)).